The sequence spans 149 residues: D-aminoacyl-tRNA deacylase (149 aa).

The Gly-cisPro motif, important for rejection of L-amino acids motif lies at 137-138; it reads GP.

The protein belongs to the DTD family. As to quaternary structure, homodimer.

It localises to the cytoplasm. The catalysed reaction is glycyl-tRNA(Ala) + H2O = tRNA(Ala) + glycine + H(+). It carries out the reaction a D-aminoacyl-tRNA + H2O = a tRNA + a D-alpha-amino acid + H(+). Functionally, an aminoacyl-tRNA editing enzyme that deacylates mischarged D-aminoacyl-tRNAs. Also deacylates mischarged glycyl-tRNA(Ala), protecting cells against glycine mischarging by AlaRS. Acts via tRNA-based rather than protein-based catalysis; rejects L-amino acids rather than detecting D-amino acids in the active site. By recycling D-aminoacyl-tRNA to D-amino acids and free tRNA molecules, this enzyme counteracts the toxicity associated with the formation of D-aminoacyl-tRNA entities in vivo and helps enforce protein L-homochirality. The chain is D-aminoacyl-tRNA deacylase from Clostridium kluyveri (strain ATCC 8527 / DSM 555 / NBRC 12016 / NCIMB 10680 / K1).